A 296-amino-acid chain; its full sequence is POM121-like protein 12 (296 aa).

Disordered regions lie at residues 1–54 (MGAA…SPWP) and 142–162 (APPERQESPWRSPGQRARPAG). Residues 34-52 (SRSPSTPQTTPSPQGRQSP) show a composition bias toward low complexity.

The protein belongs to the POM121 family.

The sequence is that of POM121-like protein 12 (POM121L12) from Homo sapiens (Human).